The chain runs to 277 residues: Undecaprenyl-diphosphatase (277 aa).

The next 7 helical transmembrane spans lie at 5–25 (WTAA…FLPI), 44–64 (RAMA…VWEF), 86–106 (LNLL…ADTI), 110–130 (LFNA…MLWA), 184–204 (AATE…AVYS), 219–239 (VFAI…RALL), and 255–275 (IAFG…WASA).

It belongs to the UppP family.

The protein resides in the cell inner membrane. The enzyme catalyses di-trans,octa-cis-undecaprenyl diphosphate + H2O = di-trans,octa-cis-undecaprenyl phosphate + phosphate + H(+). Its function is as follows. Catalyzes the dephosphorylation of undecaprenyl diphosphate (UPP). Confers resistance to bacitracin. The protein is Undecaprenyl-diphosphatase of Pseudomonas savastanoi pv. phaseolicola (strain 1448A / Race 6) (Pseudomonas syringae pv. phaseolicola (strain 1448A / Race 6)).